We begin with the raw amino-acid sequence, 591 residues long: Aspartate--tRNA ligase (591 aa).

An L-aspartate-binding site is contributed by E171. The segment at Q195–K198 is aspartate. L-aspartate is bound at residue R217. Residues R217–E219 and Q226 contribute to the ATP site. H448 serves as a coordination point for L-aspartate. E482 contacts ATP. R489 provides a ligand contact to L-aspartate. Residue G534–R537 participates in ATP binding.

This sequence belongs to the class-II aminoacyl-tRNA synthetase family. Type 1 subfamily. In terms of assembly, homodimer.

Its subcellular location is the cytoplasm. It carries out the reaction tRNA(Asp) + L-aspartate + ATP = L-aspartyl-tRNA(Asp) + AMP + diphosphate. Catalyzes the attachment of L-aspartate to tRNA(Asp) in a two-step reaction: L-aspartate is first activated by ATP to form Asp-AMP and then transferred to the acceptor end of tRNA(Asp). The protein is Aspartate--tRNA ligase of Edwardsiella ictaluri (strain 93-146).